We begin with the raw amino-acid sequence, 327 residues long: MKIAIDVMGGDRAPDEILKGALLASKEVEGEIVLIGPEEIVKNKGLPFVSASEIVKMDDPPLEVLRKKNSSMHMGLKLLSEGKVDAFVSAGATGPLFLGATSIVGKLEGIERPALGVAVPSLKGATVLIDAGANAKVRPEHLVDFAFMGIAYSKVLGAENPRVGLLNMGSEENKGPDDIKRAYQLLKEFLGDTFFGNVEGHDINLGTVDVVVADGFSGNVALKTMEGTAKLVTSVLKESIKDGGFLSLLGALLMKRSFDKMKEKLDPRSYGGTFILGVKGIVVKAHGSSDAKAIKHAIKVAEKGIRVNIVQEIERGISHVRNSGDGR.

It belongs to the PlsX family. Homodimer. Probably interacts with PlsY.

Its subcellular location is the cytoplasm. The enzyme catalyses a fatty acyl-[ACP] + phosphate = an acyl phosphate + holo-[ACP]. Its pathway is lipid metabolism; phospholipid metabolism. Its function is as follows. Catalyzes the reversible formation of acyl-phosphate (acyl-PO(4)) from acyl-[acyl-carrier-protein] (acyl-ACP). This enzyme utilizes acyl-ACP as fatty acyl donor, but not acyl-CoA. The chain is Phosphate acyltransferase from Thermotoga maritima (strain ATCC 43589 / DSM 3109 / JCM 10099 / NBRC 100826 / MSB8).